Here is a 159-residue protein sequence, read N- to C-terminus: Nucleotide-binding protein Avin_13410 (159 aa).

The protein belongs to the YajQ family.

Functionally, nucleotide-binding protein. This chain is Nucleotide-binding protein Avin_13410, found in Azotobacter vinelandii (strain DJ / ATCC BAA-1303).